Reading from the N-terminus, the 415-residue chain is WD-40 repeat-containing protein MSI2 (415 aa).

WD repeat units lie at residues 166–206, 215–255, 258–298, 302–342, and 361–401; these read GHDK…QDKV, GHES…MQHQ, VHER…APLH, SHEG…EEQL, and GHKA…YRDE. The DWD box motif lies at 232 to 248; the sequence is LFGSAGEDGRLVIWDTR.

Belongs to the WD repeat RBAP46/RBAP48/MSI1 family.

It is found in the nucleus. Functionally, core histone-binding subunit that may target chromatin assembly factors, chromatin remodeling factors and histone deacetylases to their histone substrates in a manner that is regulated by nucleosomal DNA. This is WD-40 repeat-containing protein MSI2 (MSI2) from Arabidopsis thaliana (Mouse-ear cress).